The following is a 161-amino-acid chain: Peroxynitrite isomerase (161 aa).

A GXWXGXG motif is present at residues 17–23 (GSWVGRG). Heme b is bound at residue histidine 152.

Belongs to the nitrobindin family. In terms of assembly, homodimer. Heme b serves as cofactor.

It catalyses the reaction peroxynitrite = nitrate. It participates in nitrogen metabolism. In terms of biological role, heme-binding protein able to scavenge peroxynitrite and to protect free L-tyrosine against peroxynitrite-mediated nitration, by acting as a peroxynitrite isomerase that converts peroxynitrite to nitrate. Therefore, this protein likely plays a role in peroxynitrite sensing and in the detoxification of reactive nitrogen and oxygen species (RNS and ROS, respectively). Is able to bind nitric oxide (NO) in vitro, but may act as a sensor of peroxynitrite levels in vivo. In Mycobacterium leprae (strain TN), this protein is Peroxynitrite isomerase.